The sequence spans 151 residues: Transcriptional repressor NrdR (151 aa).

Residues 3 to 34 (CPYCGSLDNKVIDSRLSRDDTETRRRRECLEC) fold into a zinc finger. Residues 49-139 (LMIVKKDGRR…VYREFKDVHD (91 aa)) enclose the ATP-cone domain.

Belongs to the NrdR family. It depends on Zn(2+) as a cofactor.

Negatively regulates transcription of bacterial ribonucleotide reductase nrd genes and operons by binding to NrdR-boxes. In Desulfosudis oleivorans (strain DSM 6200 / JCM 39069 / Hxd3) (Desulfococcus oleovorans), this protein is Transcriptional repressor NrdR.